The following is a 655-amino-acid chain: FYVE, RhoGEF and PH domain-containing protein 2 (655 aa).

A phosphoserine mark is found at Ser-11 and Ser-48. A disordered region spans residues 18–64 (VFENSRTPEAAPRGQRLEDVHHRPECRPPESPGPREKTNVGEAVGSE). The span at 32 to 56 (QRLEDVHHRPECRPPESPGPREKTN) shows a compositional bias: basic and acidic residues. The region spanning 102–290 (PEKKIVQELL…FSAAQHSNAA (189 aa)) is the DH domain. Residues 319–418 (TLLREGPVLK…WMQAFQAAID (100 aa)) form the PH 1 domain. The FYVE-type zinc finger occupies 458-518 (DKMVTMCMRC…VCLHCYAFLT (61 aa)). Zn(2+) contacts are provided by Cys-464, Cys-467, Cys-481, Cys-484, Cys-489, Cys-492, Cys-510, and Cys-513. Residues 544-641 (QSLMCSFLQL…WVKAMERAAS (98 aa)) form the PH 2 domain. Ser-654 bears the Phosphoserine mark.

The protein resides in the cytoplasm. It localises to the cytoskeleton. It is found in the nucleus. The protein localises to the early endosome. Its subcellular location is the early endosome membrane. The protein resides in the cell projection. It localises to the ruffle membrane. Functionally, activates CDC42, a member of the Ras-like family of Rho- and Rac proteins, by exchanging bound GDP for free GTP. Activates JNK1 via CDC42 but not RAC1. Binds to phosphatidylinositol 4,5-bisphosphate, phosphatidylinositol 3,4,5-trisphosphate, phosphatidylinositol 5-monophosphate, phosphatidylinositol 4-monophosphate and phosphatidylinositol 3-monophosphate. The sequence is that of FYVE, RhoGEF and PH domain-containing protein 2 (FGD2) from Homo sapiens (Human).